Here is a 1495-residue protein sequence, read N- to C-terminus: Pregnancy zone protein (1495 aa).

The signal sequence occupies residues 1-24 (MRRNQLPTPAFLLLFLLLPRDATT). Cysteines 48 and 86 form a disulfide. Residues N55 and N157 are each glycosylated (N-linked (GlcNAc...) asparagine). Cystine bridges form between C249–C298 and C267–C286. 3 N-linked (GlcNAc...) asparagine glycosylation sites follow: N382, N405, and N412. The cysteines at positions 469 and 562 are disulfide-linked. N568 carries N-linked (GlcNAc...) asparagine glycosylation. 6 disulfides stabilise this stretch: C594–C783, C642–C689, C833–C861, C859–C895, C933–C1339, and C1092–C1140. Residues 686 to 744 (PRFCQEFQHYPAMGGVAPQALAVAASGPGSSFRAMGVPMMGLDYSDEINQVVEVRETVR) are bait region. N-linked (GlcNAc...) asparagine glycans are attached at residues N881 and N942. A cross-link (isoglutamyl cysteine thioester (Cys-Gln)) is located at residues 984–987 (CGEQ). A glycan (N-linked (GlcNAc...) asparagine) is linked at N1003. N1385 and N1443 each carry an N-linked (GlcNAc...) asparagine glycan.

Belongs to the protease inhibitor I39 (alpha-2-macroglobulin) family. As to expression, highest expression in liver, medium expression in ovary, heart and stomach. Low expression in lung, kidney and uterus. Protein found in plasma.

It is found in the secreted. In terms of biological role, is able to inhibit all four classes of proteinases by a unique 'trapping' mechanism. This protein has a peptide stretch, called the 'bait region' which contains specific cleavage sites for different proteinases. When a proteinase cleaves the bait region, a conformational change is induced in the protein which traps the proteinase. The entrapped enzyme remains active against low molecular weight substrates (activity against high molecular weight substrates is greatly reduced). Following cleavage in the bait region, a thioester bond is hydrolyzed and mediates the covalent binding of the protein to the proteinase. This is Pregnancy zone protein (Pzp) from Mus musculus (Mouse).